The chain runs to 229 residues: Potassium/proton antiporter CemA (229 aa).

3 consecutive transmembrane segments (helical) span residues 7–27 (FTPL…SFSV), 107–127 (ILHF…SILG), and 189–209 (IISG…KYWI).

The protein belongs to the CemA family.

It is found in the plastid. Its subcellular location is the chloroplast inner membrane. It catalyses the reaction K(+)(in) + H(+)(out) = K(+)(out) + H(+)(in). Functionally, contributes to K(+)/H(+) antiport activity by supporting proton efflux to control proton extrusion and homeostasis in chloroplasts in a light-dependent manner to modulate photosynthesis. Prevents excessive induction of non-photochemical quenching (NPQ) under continuous-light conditions. Indirectly promotes efficient inorganic carbon uptake into chloroplasts. The polypeptide is Potassium/proton antiporter CemA (Nicotiana sylvestris (Wood tobacco)).